The sequence spans 91 residues: Progonadoliberin-1 (91 aa).

The N-terminal stretch at 1-23 (MEPIPKLLAGLLLLTLCVVGCSS) is a signal peptide. Q24 carries the post-translational modification Pyrrolidone carboxylic acid. Residue G33 is modified to Glycine amide.

Belongs to the GnRH family. In terms of processing, the precursor is cleaved by ACE, which removes the Gly-Lys-Arg peptide at the C-terminus, leading to mature hormone. The mature form of Gonadoliberin-1 is also cleaved and degraded by ACE.

The protein localises to the secreted. Stimulates the secretion of gonadotropins; it stimulates the secretion of both luteinizing and follicle-stimulating hormones. In Sus scrofa (Pig), this protein is Progonadoliberin-1 (GNRH1).